Reading from the N-terminus, the 232-residue chain is Large ribosomal subunit protein uL1 (232 aa).

It belongs to the universal ribosomal protein uL1 family. Part of the 50S ribosomal subunit.

Functionally, binds directly to 23S rRNA. The L1 stalk is quite mobile in the ribosome, and is involved in E site tRNA release. Protein L1 is also a translational repressor protein, it controls the translation of the L11 operon by binding to its mRNA. In Bordetella bronchiseptica (strain ATCC BAA-588 / NCTC 13252 / RB50) (Alcaligenes bronchisepticus), this protein is Large ribosomal subunit protein uL1.